The sequence spans 64 residues: Large ribosomal subunit protein bL33 (64 aa).

Belongs to the bacterial ribosomal protein bL33 family.

In Synechococcus sp. (strain WH7803), this protein is Large ribosomal subunit protein bL33.